The sequence spans 434 residues: Glutamate-1-semialdehyde 2,1-aminomutase 1 (434 aa).

An N6-(pyridoxal phosphate)lysine modification is found at Lys-270.

The protein belongs to the class-III pyridoxal-phosphate-dependent aminotransferase family. HemL subfamily. As to quaternary structure, homodimer. Pyridoxal 5'-phosphate is required as a cofactor.

Its subcellular location is the cytoplasm. The catalysed reaction is (S)-4-amino-5-oxopentanoate = 5-aminolevulinate. Its pathway is porphyrin-containing compound metabolism; protoporphyrin-IX biosynthesis; 5-aminolevulinate from L-glutamyl-tRNA(Glu): step 2/2. This is Glutamate-1-semialdehyde 2,1-aminomutase 1 from Bacillus thuringiensis subsp. konkukian (strain 97-27).